A 98-amino-acid polypeptide reads, in one-letter code: NADH-ubiquinone oxidoreductase chain 4L (98 aa).

3 helical membrane-spanning segments follow: residues 2–22, 29–49, and 61–81; these read PSIS…MLMF, SLLC…LIIL, and ILLL…LVTV.

The protein belongs to the complex I subunit 4L family. As to quaternary structure, core subunit of respiratory chain NADH dehydrogenase (Complex I) which is composed of 45 different subunits.

Its subcellular location is the mitochondrion inner membrane. The enzyme catalyses a ubiquinone + NADH + 5 H(+)(in) = a ubiquinol + NAD(+) + 4 H(+)(out). In terms of biological role, core subunit of the mitochondrial membrane respiratory chain NADH dehydrogenase (Complex I) which catalyzes electron transfer from NADH through the respiratory chain, using ubiquinone as an electron acceptor. Part of the enzyme membrane arm which is embedded in the lipid bilayer and involved in proton translocation. This Microcebus mamiratra (Claire's mouse lemur) protein is NADH-ubiquinone oxidoreductase chain 4L (MT-ND4L).